Reading from the N-terminus, the 329-residue chain is Sex comb on midleg-like protein 1 (329 aa).

The interval 125 to 194 is disordered; it reads NEVHESFSYP…SDFSEHNYQP (70 aa). Phosphoserine is present on Ser138. Basic and acidic residues predominate over residues 159–168; that stretch reads FRMEEYQRAE. Ser238 carries the post-translational modification Phosphoserine. The SAM domain occupies 258–325; sequence WSVEAVVLFL…YYIDRLKQGK (68 aa).

This sequence belongs to the SCM family. As to expression, highly expressed in testis and pancreas. Preferentially expressed in the germ stem cells of testis.

The protein resides in the nucleus. In terms of biological role, putative Polycomb group (PcG) protein. PcG proteins act by forming multiprotein complexes, which are required to maintain the transcriptionally repressive state of homeotic genes throughout development. May be involved in spermatogenesis during sexual maturation. The polypeptide is Sex comb on midleg-like protein 1 (SCML1) (Macaca mulatta (Rhesus macaque)).